Consider the following 119-residue polypeptide: Beta-2-microglobulin (119 aa).

An N-terminal signal peptide occupies residues Met1–Ala20. Residues Pro25–Lys114 form the Ig-like C1-type domain. The cysteines at positions 45 and 100 are disulfide-linked.

The protein belongs to the beta-2-microglobulin family. Heterodimer of an alpha chain and a beta chain. Beta-2-microglobulin is the beta-chain of major histocompatibility complex class I molecules.

The protein resides in the secreted. In terms of biological role, component of the class I major histocompatibility complex (MHC). Involved in the presentation of peptide antigens to the immune system. The sequence is that of Beta-2-microglobulin (B2M) from Saimiri boliviensis boliviensis (Bolivian squirrel monkey).